The sequence spans 379 residues: Cytochrome b (379 aa).

The next 4 helical transmembrane spans lie at 32–52 (YGSL…VLAT), 76–98 (WLLR…LHIG), 111–131 (VWNI…LGYV), and 177–197 (FFAL…LHIF). The heme b site is built by His-82 and His-96. Positions 181 and 195 each coordinate heme b. Residue His-200 participates in a ubiquinone binding. Transmembrane regions (helical) follow at residues 223 to 243 (YSVK…VFTL), 287 to 304 (LGGV…FLFS), 320 to 340 (LARL…WLGS), and 348 to 367 (NEVA…TMCA).

It belongs to the cytochrome b family. The main subunits of complex b-c1 are: cytochrome b, cytochrome c1 and the Rieske protein. Heme b is required as a cofactor.

Its subcellular location is the mitochondrion inner membrane. Its function is as follows. Component of the ubiquinol-cytochrome c reductase complex (complex III or cytochrome b-c1 complex) that is part of the mitochondrial respiratory chain. The b-c1 complex mediates electron transfer from ubiquinol to cytochrome c. Contributes to the generation of a proton gradient across the mitochondrial membrane that is then used for ATP synthesis. This chain is Cytochrome b (mt:Cyt-b), found in Brachionus plicatilis (Marine rotifer).